The primary structure comprises 402 residues: Argininosuccinate synthase (402 aa).

Position 9 to 17 (9 to 17 (AYSGGLDTS)) interacts with ATP. L-citrulline is bound at residue Y86. G116 is an ATP binding site. L-aspartate is bound by residues T118, N122, and D123. Residue N122 coordinates L-citrulline. Residues R126, S174, S183, E259, and Y271 each contribute to the L-citrulline site.

The protein belongs to the argininosuccinate synthase family. Type 1 subfamily. In terms of assembly, homotetramer.

The protein localises to the cytoplasm. It carries out the reaction L-citrulline + L-aspartate + ATP = 2-(N(omega)-L-arginino)succinate + AMP + diphosphate + H(+). The protein operates within amino-acid biosynthesis; L-arginine biosynthesis; L-arginine from L-ornithine and carbamoyl phosphate: step 2/3. In Anoxybacillus flavithermus (strain DSM 21510 / WK1), this protein is Argininosuccinate synthase.